Consider the following 840-residue polypeptide: Recyclin-1 (840 aa).

Residues 1 to 48 (MDDLLKVPEIVTNIASYLSTVDYLSFQQVNKRVYAIINGKNDSKYWSL) enclose the F-box domain. S409 is modified (phosphoserine).

As to quaternary structure, interacts with SKP1.

The protein resides in the cytoplasm. Its subcellular location is the bud neck. The protein localises to the cell tip. Functionally, involved in recycling plasma membrane proteins internalized by endocytosis. Required for recycling of the v-SNARE SNC1. This Saccharomyces cerevisiae (strain ATCC 204508 / S288c) (Baker's yeast) protein is Recyclin-1 (RCY1).